Here is a 960-residue protein sequence, read N- to C-terminus: Probable glutamyl endopeptidase, chloroplastic (960 aa).

A chloroplast-targeting transit peptide spans 1 to 62 (MMRFHKACHR…FSENPLTTVM (62 aa)). The disordered stretch occupies residues 78-98 (SGGAEDGGGTSNGSLSASATA). The span at 89 to 98 (NGSLSASATA) shows a compositional bias: polar residues. Catalysis depends on charge relay system residues Ser-780, Asp-854, and His-888. The segment at 915–960 (TSDADTSPDQSKEGSDSADKVSTGTGGGNPEFGEHEVHSKLRRSLL) is disordered. The span at 924–933 (QSKEGSDSAD) shows a compositional bias: basic and acidic residues.

This sequence belongs to the peptidase S9D family.

It localises to the plastid. The protein resides in the chloroplast stroma. Serine-type protease active in vitro against the LHCII N-terminal. Cleaves its substrate on the carboxy-side of Glu residues. In Arabidopsis thaliana (Mouse-ear cress), this protein is Probable glutamyl endopeptidase, chloroplastic (GEP).